The following is a 76-amino-acid chain: MKFTLFSVLVVLLIATFVAADDCPRICTADFRPVCGTPSGGRRSANRTFGNQCSLDSHNCLNKGDTYDKLHDGECK.

The signal sequence occupies residues 1–21 (MKFTLFSVLVVLLIATFVAAD). Positions 22-76 (DCPRICTADFRPVCGTPSGGRRSANRTFGNQCSLDSHNCLNKGDTYDKLHDGECK) constitute a Kazal-like domain. 3 disulfide bridges follow: Cys23–Cys60, Cys27–Cys53, and Cys35–Cys75.

Expressed by the salivary gland.

The protein resides in the secreted. Functionally, vasodilator protein that inhibits vasoconstriction of isolated rat femoral artery induced by phenylephrine. Since platelet aggregation and vasoconstriction are key hemostatic responses, particularly in small wounds, this protein likely participates in the antihemostatic responses during blood feeding. Blocks L-type calcium channels (Cav1/CACNA1) in left ventricular myocytes isolated from rat hearts. This is Vasotab-TY1 from Tabanus yao (Horsefly).